Reading from the N-terminus, the 410-residue chain is Histidine--tRNA ligase (410 aa).

The protein belongs to the class-II aminoacyl-tRNA synthetase family.

It is found in the cytoplasm. It catalyses the reaction tRNA(His) + L-histidine + ATP = L-histidyl-tRNA(His) + AMP + diphosphate + H(+). The protein is Histidine--tRNA ligase of Methanoculleus marisnigri (strain ATCC 35101 / DSM 1498 / JR1).